The following is a 314-amino-acid chain: Probable cell division protein WhiA (314 aa).

The segment at residues 274–308 is a DNA-binding region (H-T-H motif); it reads SLKELGEMVSTGPISKSGVNHRLRKLNDLADKIRN.

This sequence belongs to the WhiA family.

Its function is as follows. Involved in cell division and chromosome segregation. This is Probable cell division protein WhiA from Staphylococcus aureus (strain Mu3 / ATCC 700698).